A 417-amino-acid chain; its full sequence is MFSKHDQIRGYDDELLAAMDAEEARQEDHLELIASENYTSKRVMQAQGSGLTNKYAEGYPGKRYYGGCEHVDKVERLAIDRARQLFGADYANVQPHSGSSANAAVYLALLNAGDTILGMSLAHGGHLTHGAKVSSSGKLYNAVQYGLDTATGLIDYDEVERLAVEHKPKMIVAGFSAYSKTLDFPRFRAIADKVGALLFVDMAHVAGLVAAGLYPNPIPFADVVTTTTHKTLRGPRGGLILARANEEIEKKLNSAVFPGAQGGPLMHVIAAKAVCFKEALEPGFKDYQAQVIRNAKAMAEVFIGRGYDVVSGGTDNHLMLISLVRQGLTGKEADAALGRVGITVNKNAVPNDPQSPFVTSGIRIGTPAITTRGLQEAQSRELAGWICDILDHLGDADVEAKVATQVAGLCADFPVYR.

Residues Leu121 and 125–127 (GHL) contribute to the (6S)-5,6,7,8-tetrahydrofolate site. Lys230 is modified (N6-(pyridoxal phosphate)lysine). Residue 355 to 357 (SPF) participates in (6S)-5,6,7,8-tetrahydrofolate binding.

This sequence belongs to the SHMT family. In terms of assembly, homodimer. Pyridoxal 5'-phosphate serves as cofactor.

It localises to the cytoplasm. It catalyses the reaction (6R)-5,10-methylene-5,6,7,8-tetrahydrofolate + glycine + H2O = (6S)-5,6,7,8-tetrahydrofolate + L-serine. It participates in one-carbon metabolism; tetrahydrofolate interconversion. Its pathway is amino-acid biosynthesis; glycine biosynthesis; glycine from L-serine: step 1/1. In terms of biological role, catalyzes the reversible interconversion of serine and glycine with tetrahydrofolate (THF) serving as the one-carbon carrier. This reaction serves as the major source of one-carbon groups required for the biosynthesis of purines, thymidylate, methionine, and other important biomolecules. Also exhibits THF-independent aldolase activity toward beta-hydroxyamino acids, producing glycine and aldehydes, via a retro-aldol mechanism. In Pseudomonas aeruginosa (strain ATCC 15692 / DSM 22644 / CIP 104116 / JCM 14847 / LMG 12228 / 1C / PRS 101 / PAO1), this protein is Serine hydroxymethyltransferase 1.